Consider the following 150-residue polypeptide: Large ribosomal subunit protein bL9 (150 aa).

Belongs to the bacterial ribosomal protein bL9 family.

In terms of biological role, binds to the 23S rRNA. The protein is Large ribosomal subunit protein bL9 of Serratia proteamaculans (strain 568).